The following is a 470-amino-acid chain: Glutamate--tRNA ligase 2 (470 aa).

Positions 11–21 (PSPTGHLHLGG) match the 'HIGH' region motif. Positions 238 to 242 (KLSKR) match the 'KMSKS' region motif. K241 contacts ATP.

It belongs to the class-I aminoacyl-tRNA synthetase family. Glutamate--tRNA ligase type 1 subfamily. Monomer.

Its subcellular location is the cytoplasm. The enzyme catalyses tRNA(Glu) + L-glutamate + ATP = L-glutamyl-tRNA(Glu) + AMP + diphosphate. In terms of biological role, catalyzes the attachment of glutamate to tRNA(Glu) in a two-step reaction: glutamate is first activated by ATP to form Glu-AMP and then transferred to the acceptor end of tRNA(Glu). The protein is Glutamate--tRNA ligase 2 of Ehrlichia ruminantium (strain Welgevonden).